Consider the following 492-residue polypeptide: Proline--tRNA ligase (492 aa).

This sequence belongs to the class-II aminoacyl-tRNA synthetase family. ProS type 3 subfamily. Homodimer.

The protein resides in the cytoplasm. The enzyme catalyses tRNA(Pro) + L-proline + ATP = L-prolyl-tRNA(Pro) + AMP + diphosphate. Catalyzes the attachment of proline to tRNA(Pro) in a two-step reaction: proline is first activated by ATP to form Pro-AMP and then transferred to the acceptor end of tRNA(Pro). The sequence is that of Proline--tRNA ligase from Flavobacterium psychrophilum (strain ATCC 49511 / DSM 21280 / CIP 103535 / JIP02/86).